The sequence spans 84 residues: Tenecin-1 (84 aa).

The N-terminal stretch at 1-19 (MKLTIFALVACFFILQIAA) is a signal peptide. The propeptide occupies 20–41 (FPLEEAATAEEIEQGEHIRVKR). 3 disulfide bridges follow: Cys-44–Cys-75, Cys-61–Cys-81, and Cys-65–Cys-83.

Belongs to the invertebrate defensin family. Type 1 subfamily.

The protein resides in the secreted. Its function is as follows. Bactericidal protein produced in response to injury. It is cytotoxic to Gram-positive bacteria. The chain is Tenecin-1 from Tenebrio molitor (Yellow mealworm beetle).